A 262-amino-acid chain; its full sequence is MSGQTTSEYISHHLSFLKTGDGFWNVHIDTLFFSILAAVIFLFVFSRVGKKATTGVPGKMQCLVEIVVEWVNGIVKENFHGPRNVVAPLALTIFCWVFIMNAIDLIPVDFLPQFAGLFGIHYLRAVPTADISATLGMSICVFFLILFYTIKSKGFKGLVKEYTLHPFNHWAFIPVNFILETVTLLAKPISLAFRLFGNMYAGELIFILIAVMYSANMAIAALGIPLHLAWAIFHILVITLQAFIFMMLTVVYLSIAYNKADH.

5 helical membrane passes run 26-46 (VHID…FVFS), 86-106 (VAPL…IDLI), 130-150 (DISA…FYTI), 204-226 (LIFI…GIPL), and 240-260 (LQAF…YNKA).

It belongs to the ATPase A chain family. F-type ATPases have 2 components, CF(1) - the catalytic core - and CF(0) - the membrane proton channel. CF(1) has five subunits: alpha(3), beta(3), gamma(1), delta(1), epsilon(1). CF(0) has three main subunits: a(1), b(2) and c(9-12). The alpha and beta chains form an alternating ring which encloses part of the gamma chain. CF(1) is attached to CF(0) by a central stalk formed by the gamma and epsilon chains, while a peripheral stalk is formed by the delta and b chains.

It localises to the cell inner membrane. In terms of biological role, key component of the proton channel; it plays a direct role in the translocation of protons across the membrane. The chain is ATP synthase subunit a from Haemophilus influenzae (strain 86-028NP).